Here is a 146-residue protein sequence, read N- to C-terminus: Protein SprT-like (146 aa).

The 139-residue stretch at 4–142 folds into the SprT-like domain; sequence NEYVKQVSLE…GRCKGKLRLL (139 aa). His-64 contacts Zn(2+). The active site involves Glu-65. His-68 is a Zn(2+) binding site.

This sequence belongs to the SprT family. Zn(2+) serves as cofactor.

The protein resides in the cytoplasm. This is Protein SprT-like from Streptococcus gordonii (strain Challis / ATCC 35105 / BCRC 15272 / CH1 / DL1 / V288).